We begin with the raw amino-acid sequence, 705 residues long: Polyribonucleotide nucleotidyltransferase (705 aa).

The Mg(2+) site is built by Asp492 and Asp498. One can recognise a KH domain in the interval 559 to 618 (PLMITMKVSPDKIRHIIGPGGKIINKIIDETGVEIDIDDDGSVYILAQDQESGNRAKEII). In terms of domain architecture, S1 motif spans 628 to 696 (GDIYEGRVKK…ELGRINLSRK (69 aa)).

It belongs to the polyribonucleotide nucleotidyltransferase family. Mg(2+) is required as a cofactor.

The protein resides in the cytoplasm. The enzyme catalyses RNA(n+1) + phosphate = RNA(n) + a ribonucleoside 5'-diphosphate. Functionally, involved in mRNA degradation. Catalyzes the phosphorolysis of single-stranded polyribonucleotides processively in the 3'- to 5'-direction. The sequence is that of Polyribonucleotide nucleotidyltransferase from Halothermothrix orenii (strain H 168 / OCM 544 / DSM 9562).